The sequence spans 418 residues: RuvB-like helicase 2 (418 aa).

Residue 65–72 (GDRGSGKT) coordinates ATP.

The protein belongs to the RuvB family. As to quaternary structure, component of the SWR1 chromatin remodeling complex, the INO80 chromatin remodeling complex, and of the R2TP complex.

The protein localises to the nucleus. It carries out the reaction ATP + H2O = ADP + phosphate + H(+). In terms of biological role, DNA helicase which participates in several chromatin remodeling complexes, including the SWR1 and the INO80 complexes. The SWR1 complex mediates the ATP-dependent exchange of histone H2A for the H2A variant HZT1 leading to transcriptional regulation of selected genes by chromatin remodeling. The INO80 complex remodels chromatin by shifting nucleosomes and is involved in DNA repair. Also involved in pre-rRNA processing. This chain is RuvB-like helicase 2 (RVB2), found in Encephalitozoon cuniculi (strain GB-M1) (Microsporidian parasite).